A 272-amino-acid polypeptide reads, in one-letter code: Insulin-like growth factor-binding protein 1 (272 aa).

The N-terminal stretch at 1-25 is a signal peptide; that stretch reads MPEFLTVVSWPFLILLSFQVRVVAG. The region spanning 28–109 is the IGFBP N-terminal domain; sequence QPWHCAPCTA…TRGQGACVLE (82 aa). 6 disulfides stabilise this stretch: Cys32–Cys59, Cys35–Cys61, Cys43–Cys62, Cys50–Cys65, Cys73–Cys86, and Cys80–Cys106. Residues 115-143 are disordered; the sequence is TSSLSGSQHEEAKAAVASEDELAESPEMT. Positions 132-143 are enriched in acidic residues; the sequence is SEDELAESPEMT. A phosphoserine mark is found at Ser139, Ser157, and Ser169. Thr170 is subject to Phosphothreonine. Tyr171 is modified (phosphotyrosine). The Thyroglobulin type-1 domain maps to 186-264; it reads KEPCQRELYK…SLETRGDPNC (79 aa). Disulfide bonds link Cys189-Cys219, Cys230-Cys241, and Cys243-Cys264. Position 255 is a phosphoserine (Ser255). The Cell attachment site signature appears at 259–261; that stretch reads RGD.

As to quaternary structure, binds equally well IGF1 and IGF2. Interacts with integrin ITGA5:ITGB1. Interacts with VHL; this interaction inhibits HIF1A degradation.

Its subcellular location is the secreted. Functionally, multifunctional protein that plays a critical role in regulating the availability of IGFs such as IGF1 and IGF2 to their receptors and thereby regulates IGF-mediated cellular processes including cell migration, proliferation, differentiation or apoptosis in a cell-type specific manner. Also plays a positive role in cell migration by interacting with integrin ITGA5:ITGB1 through its RGD motif. Mechanistically, binding to integrins leads to activation of focal adhesion kinase/PTK2 and stimulation of the mitogen-activated protein kinase (MAPK) pathway. Regulates cardiomyocyte apoptosis by suppressing HIF-1alpha/HIF1A ubiquitination and subsequent degradation. In Rattus norvegicus (Rat), this protein is Insulin-like growth factor-binding protein 1 (Igfbp1).